A 1403-amino-acid chain; its full sequence is Eukaryotic translation initiation factor 4 gamma (1403 aa).

Polar residues-rich tracts occupy residues 1–11 (MSSKPPSNTPK), 19–39 (ASSQSNKSNSTKASENNTATA), and 50–60 (EPTNTSRANAQ). Disordered regions lie at residues 1 to 381 (MSSK…GSTP), 439 to 464 (SRSGSQVSDQVVESPNSSTLSPRNGF), 488 to 774 (VVVP…KRDL), and 861 to 1003 (AFSD…EALL). The residue at position 83 (Ser83) is a Phosphoserine. Residues 109–137 (DNTSKPSANSSAERTSSQHQKPETSSQIG) show a composition bias toward polar residues. Composition is skewed to low complexity over residues 190-208 (SGVSSYSSKSQSVNSSVTS) and 231-248 (PRPTTSASNTNTSPANGA). A compositionally biased stretch (polar residues) spans 249 to 269 (PTNKPSTDINTTDPATQTTQV). A compositionally biased stretch (low complexity) spans 270 to 291 (SASNSPALSGSSTPSNTSSRSN). Residues 298 to 308 (FSEKRHYDRYG) are compositionally biased toward basic and acidic residues. Positions 325-334 (NYNNSGNNRN) are enriched in low complexity. Composition is skewed to polar residues over residues 346–381 (RNYNNQGAYPTYMSNGRSANQSPRNNPQNVNNGSTP), 439–460 (SRSGSQVSDQVVESPNSSTLSP), and 493–508 (KNASSPNPSETNSRAE). Phosphoserine occurs at positions 452, 455, 456, and 459. The span at 537–714 (IQEKAEAEAK…GKREADKNPE (178 aa)) shows a compositional bias: basic and acidic residues. Positions 720-737 (PLASSEANVDTSKQTNAT) are enriched in polar residues. Basic and acidic residues predominate over residues 741-754 (VVDKTKVEKLKASE). A compositionally biased stretch (low complexity) spans 757–768 (STSSLSSPSHST). A phosphoserine mark is found at Ser866 and Ser882. The span at 868-886 (RGMYSSSRQSSRSGSNTHS) shows a compositional bias: low complexity. Thr884 is modified (phosphothreonine). Phosphoserine is present on residues Ser886, Ser911, Ser919, and Ser921. At Tyr923 the chain carries Phosphotyrosine. Basic and acidic residues predominate over residues 986 to 995 (KLTEKPAETK). An MIF4G domain is found at 1009-1245 (QRKVKGSLNK…MDVMDSRKNG (237 aa)). A disordered region spans residues 1266-1403 (AERKKALAES…QKDSNSKTSS (138 aa)). The segment covering 1284–1295 (HGRDMNRGDSRM) has biased composition (basic and acidic residues). Polar residues-rich tracts occupy residues 1302–1313 (PPFSSSDWSNNK), 1328–1341 (SGTQGSHGPTSLSS), and 1348–1358 (VSRTPSRQNSA). Position 1333 is a phosphoserine (Ser1333). Residues 1383–1403 (LEEHDHDNDGGQKDSNSKTSS) are compositionally biased toward basic and acidic residues.

This sequence belongs to the eukaryotic initiation factor 4G family.

It is found in the cytoplasm. It localises to the perinuclear region. Its function is as follows. Component of the protein complex eIF4F, which is involved in the recognition of the mRNA cap, ATP-dependent unwinding of 5'-terminal secondary structure and recruitment of mRNA to the ribosome. This chain is Eukaryotic translation initiation factor 4 gamma (tif471), found in Schizosaccharomyces pombe (strain 972 / ATCC 24843) (Fission yeast).